Here is a 152-residue protein sequence, read N- to C-terminus: Endoribonuclease YbeY (152 aa).

Residues H117, H121, and H127 each coordinate Zn(2+).

Belongs to the endoribonuclease YbeY family. Requires Zn(2+) as cofactor.

It localises to the cytoplasm. Functionally, single strand-specific metallo-endoribonuclease involved in late-stage 70S ribosome quality control and in maturation of the 3' terminus of the 16S rRNA. This is Endoribonuclease YbeY from Borreliella afzelii (strain PKo) (Borrelia afzelii).